The sequence spans 553 residues: Coiled-coil domain-containing protein 22 homolog (553 aa).

Coiled-coil stretches lie at residues 261-404 and 498-553; these read LEEL…TATQ and NVTK…VAKA.

Belongs to the CCDC22 family.

This chain is Coiled-coil domain-containing protein 22 homolog, found in Drosophila pseudoobscura pseudoobscura (Fruit fly).